Consider the following 112-residue polypeptide: UPF0060 membrane protein CMS0846 (112 aa).

4 consecutive transmembrane segments (helical) span residues 6–26, 32–52, 61–81, and 87–107; these read VILF…IWQA, PFWW…IATL, ILAA…TVVD, and RWDV…MAAP.

This sequence belongs to the UPF0060 family.

Its subcellular location is the cell membrane. The sequence is that of UPF0060 membrane protein CMS0846 from Clavibacter sepedonicus (Clavibacter michiganensis subsp. sepedonicus).